The following is a 485-amino-acid chain: E3 ubiquitin-protein ligase rnf8 (485 aa).

In terms of domain architecture, FHA spans 43–97 (VSVGRGLNVTHQILSSSCPLMISRIHCVFKLNEGRQWTVTDNKSLNGVWVNGKRI). Residues 150–232 (AASLSQKLKN…SSTCSDSSQH (83 aa)) form a disordered region. Residues 199–219 (GERRETLKLSSRPLEEDRDKA) show a composition bias toward basic and acidic residues. Residues 221-230 (SSSSTCSDSS) are compositionally biased toward low complexity. Residues 392–430 (CSICSELFIEAVTLNCAHSFCQHCISEWRNRKDKCPMCW) form an RING-type zinc finger.

Belongs to the RNF8 family. In terms of assembly, homodimer. Forms a E2-E3 ubiquitin ligase complex composed of the rnf8 homodimer and a E2 heterodimer of ube2n and ube2v2.

It localises to the nucleus. The catalysed reaction is S-ubiquitinyl-[E2 ubiquitin-conjugating enzyme]-L-cysteine + [acceptor protein]-L-lysine = [E2 ubiquitin-conjugating enzyme]-L-cysteine + N(6)-ubiquitinyl-[acceptor protein]-L-lysine.. Its pathway is protein modification; protein ubiquitination. In terms of biological role, E3 ubiquitin-protein ligase that plays a key role in DNA damage signaling via 2 distinct roles: by mediating the 'Lys-63'-linked ubiquitination of histones H2A and H2AX and promoting the recruitment of DNA repair proteins at double-strand breaks (DSBs) sites, and by catalyzing 'Lys-48'-linked ubiquitination to remove target proteins from DNA damage sites. Following DNA DSBs, it is recruited to the sites of damage by ATM-phosphorylated mdc1 and catalyzes the 'Lys-63'-linked ubiquitination of histones H2A and H2AX. H2A ubiquitination also mediates the ATM-dependent transcriptional silencing at regions flanking DSBs in cis, a mechanism to avoid collision between transcription and repair intermediates. Also catalyzes the formation of 'Lys-48'-linked polyubiquitin chains, leading to degradation of substrate proteins. In addition to its function in damage signaling, also plays a role in higher-order chromatin structure by mediating extensive chromatin decondensation. This is E3 ubiquitin-protein ligase rnf8 from Danio rerio (Zebrafish).